A 149-amino-acid chain; its full sequence is MECVPQILVDADACPVKAEIKQVAKEFQLEVTFVASFNHYSVNTNGENWIFVDTGKESADMRMMNLAKKGDIIVTQDIGLASILLAKGTFVFSNRGELYREEEMSLMLDIRYRHAKERQQGKYSKGPKAMSDQDRSLFKDRLTTFLQNK.

This sequence belongs to the UPF0178 family.

This Listeria monocytogenes serovar 1/2a (strain ATCC BAA-679 / EGD-e) protein is UPF0178 protein Lmo1456.